The sequence spans 353 residues: Photosystem II protein D1 (353 aa).

Threonine 2 carries the post-translational modification N-acetylthreonine. Position 2 is a phosphothreonine (threonine 2). 3 helical membrane-spanning segments follow: residues 29-46, 118-133, and 142-156; these read YIGW…TATS, HFLL…EWEL, and WIAV…AATA. A chlorophyll a-binding site is contributed by histidine 118. Tyrosine 126 is a binding site for pheophytin a. Residues aspartate 170 and glutamate 189 each coordinate [CaMn4O5] cluster. Residues 197 to 218 traverse the membrane as a helical segment; it reads FHMLGVAGVFGGSLFSAMHGSL. Position 198 (histidine 198) interacts with chlorophyll a. Residue histidine 215 participates in a quinone binding. Histidine 215 and histidine 272 together coordinate Fe cation. The helical transmembrane segment at 274-288 threads the bilayer; sequence FLAAWPVVGIWFTAL. Residues histidine 332, glutamate 333, aspartate 342, and alanine 344 each contribute to the [CaMn4O5] cluster site. Positions 345 to 353 are excised as a propeptide; sequence AVEAPSING.

This sequence belongs to the reaction center PufL/M/PsbA/D family. As to quaternary structure, PSII is composed of 1 copy each of membrane proteins PsbA, PsbB, PsbC, PsbD, PsbE, PsbF, PsbH, PsbI, PsbJ, PsbK, PsbL, PsbM, PsbT, PsbX, PsbY, PsbZ, Psb30/Ycf12, at least 3 peripheral proteins of the oxygen-evolving complex and a large number of cofactors. It forms dimeric complexes. The D1/D2 heterodimer binds P680, chlorophylls that are the primary electron donor of PSII, and subsequent electron acceptors. It shares a non-heme iron and each subunit binds pheophytin, quinone, additional chlorophylls, carotenoids and lipids. D1 provides most of the ligands for the Mn4-Ca-O5 cluster of the oxygen-evolving complex (OEC). There is also a Cl(-1) ion associated with D1 and D2, which is required for oxygen evolution. The PSII complex binds additional chlorophylls, carotenoids and specific lipids. serves as cofactor. Tyr-161 forms a radical intermediate that is referred to as redox-active TyrZ, YZ or Y-Z. In terms of processing, C-terminally processed by CTPA; processing is essential to allow assembly of the oxygen-evolving complex and thus photosynthetic growth.

It localises to the plastid. The protein resides in the chloroplast thylakoid membrane. The catalysed reaction is 2 a plastoquinone + 4 hnu + 2 H2O = 2 a plastoquinol + O2. In terms of biological role, photosystem II (PSII) is a light-driven water:plastoquinone oxidoreductase that uses light energy to abstract electrons from H(2)O, generating O(2) and a proton gradient subsequently used for ATP formation. It consists of a core antenna complex that captures photons, and an electron transfer chain that converts photonic excitation into a charge separation. The D1/D2 (PsbA/PsbD) reaction center heterodimer binds P680, the primary electron donor of PSII as well as several subsequent electron acceptors. The chain is Photosystem II protein D1 from Brassica napus (Rape).